We begin with the raw amino-acid sequence, 254 residues long: NAD-dependent protein deacetylase 1 (254 aa).

Residues 3-252 form the Deacetylase sirtuin-type domain; that stretch reads VDFTTDELDE…PKLLDRLRGM (250 aa). Residues Ala-29, Thr-33, Phe-40, Arg-41, Gln-105, Val-107, Asp-108, and His-123 each contribute to the NAD(+) site. Phe-40 serves as a coordination point for nicotinamide. Positions 107 and 108 each coordinate nicotinamide. The Proton acceptor role is filled by His-123. Positions 131, 134, 154, and 157 each coordinate Zn(2+). 3 residues coordinate NAD(+): Thr-195, Ser-196, and Asn-220.

This sequence belongs to the sirtuin family. Class U subfamily. It depends on Zn(2+) as a cofactor.

The protein localises to the cytoplasm. The enzyme catalyses N(6)-acetyl-L-lysyl-[protein] + NAD(+) + H2O = 2''-O-acetyl-ADP-D-ribose + nicotinamide + L-lysyl-[protein]. NAD-dependent protein deacetylase which modulates the activities of several enzymes which are inactive in their acetylated form. Deacetylates the N-terminal lysine residue of Alba, the major archaeal chromatin protein and that, in turn, increases Alba's DNA binding affinity, thereby repressing transcription. The protein is NAD-dependent protein deacetylase 1 of Pyrobaculum aerophilum (strain ATCC 51768 / DSM 7523 / JCM 9630 / CIP 104966 / NBRC 100827 / IM2).